A 546-amino-acid polypeptide reads, in one-letter code: Pyrophosphate--fructose 6-phosphate 1-phosphotransferase (546 aa).

Gly80 provides a ligand contact to diphosphate. Position 174 (Asp174) interacts with Mg(2+). Substrate contacts are provided by residues Thr202–Asp204, Lys241–Tyr242, Met249–Arg251, Glu310, and Tyr420–Arg423. Asp204 acts as the Proton acceptor in catalysis.

It belongs to the phosphofructokinase type A (PFKA) family. PPi-dependent PFK group II subfamily. Clade 'Long' sub-subfamily. Homodimer. Mg(2+) serves as cofactor. Requires Mn(2+) as cofactor.

Its subcellular location is the cytoplasm. It catalyses the reaction beta-D-fructose 6-phosphate + diphosphate = beta-D-fructose 1,6-bisphosphate + phosphate + H(+). It participates in carbohydrate degradation; glycolysis; D-glyceraldehyde 3-phosphate and glycerone phosphate from D-glucose: step 3/4. Its activity is regulated as follows. Non-allosteric. Competitively inhibited by PPi, Pi and fructose 1,6-bisphosphate. Its function is as follows. Catalyzes the phosphorylation of D-fructose 6-phosphate, the first committing step of glycolysis. Uses inorganic phosphate (PPi) as phosphoryl donor instead of ATP like common ATP-dependent phosphofructokinases (ATP-PFKs), which renders the reaction reversible, and can thus function both in glycolysis and gluconeogenesis. Consistently, PPi-PFK can replace the enzymes of both the forward (ATP-PFK) and reverse (fructose-bisphosphatase (FBPase)) reactions. The chain is Pyrophosphate--fructose 6-phosphate 1-phosphotransferase from Entamoeba histolytica (strain ATCC 30459 / HM-1:IMSS / ABRM).